A 549-amino-acid polypeptide reads, in one-letter code: Ankyrin repeat domain-containing protein SOWAHA (549 aa).

Residues 1-17 (MALAAAAAAAAAGVSQA) form the signal peptide. Disordered regions lie at residues 82–219 (KPRP…PCML) and 235–256 (EEPG…PLLL). Residues 203–216 (PGPGAAKGPPQQKP) are compositionally biased toward low complexity. Residues 235–248 (EEPGLRRQLSEEPS) show a composition bias toward basic and acidic residues. The residue at position 260 (serine 260) is a Phosphoserine. ANK repeat units follow at residues 345-374 (SGFT…RSGA) and 384-414 (GGYT…QVHV). The interval 513–549 (PRKKTKIRGGLPAFSEISRRPTPGPLAGLVPSLPPTT) is disordered.

Belongs to the SOWAH family.

The sequence is that of Ankyrin repeat domain-containing protein SOWAHA (SOWAHA) from Homo sapiens (Human).